We begin with the raw amino-acid sequence, 633 residues long: MKAIKKSLTEEEYLYLDFSHQTEGCIFPLHTSVTLFLLSYCDCKIFKICLVVTKEVSRDSSLLRDDLIQDVEIQIISRQELPPIVQNCCLPAVVERSDNFCRAGLAVVLRHIIQKSYEADPLKKELLELLGFKKTCLKACAEVSQWTRLCELTIPLAIENFLRESSDQPPTIPVEILQLEKKLSEPVRVHNDDKLRRQKLKQQKADGVGPPLTKGKAKSKVHTQETSEGLDSSSKSLELKVAFSKLTVQEEPATTNREPSHIRKAKASDLPPLEHVFAEGLYFTLADIVLLPCIHHFLVIISRKFSEKLVEFPLLASWYQRIQEVPGVKTAASKCGIQFLHLPKLLTTSTEQHPNLCEVPGVEEQSDPLFIGGPRPTMAKLMEKGIEVMFSPHPCPTWTLDWNVLPAAVSPKEGKMSSDRALRKQQQLNNLVYVVTNQAKPGDRIVDFCSGGGHVGIVLAHMLPSCQVTLIENKELSLIRAKKRSDELGLSNIWFIQANMEYFTGMFNIGVALHACGVATDMVIEHCIKTRASFVTCPCCYGFIQNTSKFNFPKSEQFKKTLSYKEHMILCRFADQTAVQLPPQRRLIGKQCMCLVDLDRARAAEECGYSVQVISMEPESCSPKNNMIVGVPI.

Positions 130–332 constitute a GST C-terminal domain; the sequence is LGFKKTCLKA…QEVPGVKTAA (203 aa). The interval 191-233 is disordered; sequence NDDKLRRQKLKQQKADGVGPPLTKGKAKSKVHTQETSEGLDSS. The span at 224–233 shows a compositional bias: polar residues; the sequence is QETSEGLDSS. Serine 233 bears the Phosphoserine mark.

This sequence belongs to the GSTCD family. As to expression, widely expressed in cell types relevant to airway function, including airway smooth muscle cells and epithelial cells.

Its subcellular location is the cytoplasm. The polypeptide is Glutathione S-transferase C-terminal domain-containing protein (GSTCD) (Homo sapiens (Human)).